Reading from the N-terminus, the 245-residue chain is tRNA (guanine-N(1)-)-methyltransferase (245 aa).

S-adenosyl-L-methionine is bound by residues Gly-111 and 130 to 135 (IGDYVL).

Belongs to the RNA methyltransferase TrmD family. Homodimer.

The protein localises to the cytoplasm. The enzyme catalyses guanosine(37) in tRNA + S-adenosyl-L-methionine = N(1)-methylguanosine(37) in tRNA + S-adenosyl-L-homocysteine + H(+). Specifically methylates guanosine-37 in various tRNAs. The protein is tRNA (guanine-N(1)-)-methyltransferase of Dictyoglomus turgidum (strain DSM 6724 / Z-1310).